The sequence spans 297 residues: Glycerol-3-phosphate dehydrogenase [NAD(P)+] (297 aa).

NADPH-binding residues include Trp-11, Arg-30, and Lys-79. Residues Lys-79, Gly-107, and Ser-109 each coordinate sn-glycerol 3-phosphate. Position 111 (Ala-111) interacts with NADPH. Sn-glycerol 3-phosphate-binding residues include Lys-161, Asp-214, Ser-224, Arg-225, and Asn-226. The Proton acceptor role is filled by Lys-161. Arg-225 lines the NADPH pocket. The NADPH site is built by Val-249 and Glu-251.

Belongs to the NAD-dependent glycerol-3-phosphate dehydrogenase family.

The protein localises to the cytoplasm. It carries out the reaction sn-glycerol 3-phosphate + NAD(+) = dihydroxyacetone phosphate + NADH + H(+). The catalysed reaction is sn-glycerol 3-phosphate + NADP(+) = dihydroxyacetone phosphate + NADPH + H(+). Its pathway is membrane lipid metabolism; glycerophospholipid metabolism. Functionally, catalyzes the reduction of the glycolytic intermediate dihydroxyacetone phosphate (DHAP) to sn-glycerol 3-phosphate (G3P), the key precursor for phospholipid synthesis. This chain is Glycerol-3-phosphate dehydrogenase [NAD(P)+], found in Wolinella succinogenes (strain ATCC 29543 / DSM 1740 / CCUG 13145 / JCM 31913 / LMG 7466 / NCTC 11488 / FDC 602W) (Vibrio succinogenes).